A 91-amino-acid chain; its full sequence is Ribonuclease P protein component 4 (91 aa).

Positions 48, 51, 71, and 74 each coordinate Zn(2+).

It belongs to the eukaryotic/archaeal RNase P protein component 4 family. As to quaternary structure, consists of a catalytic RNA component and at least 4-5 protein subunits. Zn(2+) serves as cofactor.

It localises to the cytoplasm. It carries out the reaction Endonucleolytic cleavage of RNA, removing 5'-extranucleotides from tRNA precursor.. Functionally, part of ribonuclease P, a protein complex that generates mature tRNA molecules by cleaving their 5'-ends. The chain is Ribonuclease P protein component 4 from Picrophilus torridus (strain ATCC 700027 / DSM 9790 / JCM 10055 / NBRC 100828 / KAW 2/3).